The primary structure comprises 139 residues: Hydrogenase maturation factor HypA (139 aa).

Histidine 2 is a Ni(2+) binding site. Positions 73, 76, 110, and 113 each coordinate Zn(2+).

The protein belongs to the HypA/HybF family.

Its function is as follows. Involved in the maturation of [NiFe] hydrogenases. Required for nickel insertion into the metal center of the hydrogenase. In Pyrococcus furiosus (strain ATCC 43587 / DSM 3638 / JCM 8422 / Vc1), this protein is Hydrogenase maturation factor HypA.